The primary structure comprises 85 residues: Augerpeptide-s6a (85 aa).

The signal sequence occupies residues 1–20 (MTLTMSTVVFFSLILLTLGL). Residues 21-43 (QPKDKDEGVMGRSRLGKRGLLMR) constitute a propeptide that is removed on maturation. Cystine bridges form between Cys54–Cys65, Cys58–Cys70, and Cys64–Cys81.

As to expression, expressed by the venom duct.

The protein resides in the secreted. This chain is Augerpeptide-s6a, found in Terebra subulata (Chocolate spotted auger).